The chain runs to 891 residues: Receptor-like protein 50 (891 aa).

Residues 1–22 form the signal peptide; sequence MITIIWSLCLIFCLSNSILVIA. At 23–849 the chain is on the extracellular side; the sequence is KDLCLPDQRD…KEEKDKGLSW (827 aa). N-linked (GlcNAc...) asparagine glycans are attached at residues N62 and N98. 7 LRR repeats span residues 105–130, 132–152, 153–176, 177–201, 203–225, 226–249, and 250–272; these read QHLQ…NFKY, RVLN…LRSL, SYLT…SMGN, LKHL…LGNL, YLTD…MGNL, KSLR…LGSL, and SNLT…SMSS. The N-linked (GlcNAc...) asparagine glycan is linked to N200. N-linked (GlcNAc...) asparagine glycosylation is found at N251, N285, and N306. LRR repeat units follow at residues 286–309, 310–334, 336–358, and 359–383; these read LSSL…NMSS, LSKL…LFML, SLIK…NISS, and PSNL…ILKL. A glycan (N-linked (GlcNAc...) asparagine) is linked at N355. One copy of the LRR 12; degenerate repeat lies at 384-407; the sequence is VGLSALSLSFWDTGGIVDFSIFLQ. 15 LRR repeats span residues 408–436, 438–453, 454–477, 478–504, 506–519, 520–544, 545–568, 570–591, 593–614, 615–641, 642–665, 712–736, 737–760, 761–784, and 786–809; these read LKSL…MMHL, LSSC…LENQ, TSLY…LWRL, PTLR…IYSF, ASDN…PRAV, CEIG…EISN, KTLS…SLHG, LRSL…LINC, YLQF…WLKS, LPNL…SLSF, SKLR…YFVG, FEIY…IGIL, KELI…LSNL, SNLQ…LGEL, and FLAR…QIQS. N422, N442, and N452 each carry an N-linked (GlcNAc...) asparagine glycan. N531, N544, N554, N590, and N605 each carry an N-linked (GlcNAc...) asparagine glycan. N743 and N759 each carry an N-linked (GlcNAc...) asparagine glycan. N-linked (GlcNAc...) asparagine glycans are attached at residues N791 and N811. Residues 850-870 form a helical membrane-spanning segment; it reads VAAAIGYVPGLFCGLAIGHIL. Residues 871-891 are Cytoplasmic-facing; sequence TSYKRDWFMRIFSCFSSPLKK.

Belongs to the RLP family.

Its subcellular location is the cell membrane. The polypeptide is Receptor-like protein 50 (Arabidopsis thaliana (Mouse-ear cress)).